Consider the following 490-residue polypeptide: Apocarotenoid-15,15'-oxygenase (490 aa).

Residue His-183 coordinates Fe cation. Substrate is bound at residue Ser-206. A Fe cation-binding site is contributed by His-238. Residue Phe-303 coordinates substrate. Fe cation is bound by residues His-304 and His-484.

Belongs to the carotenoid oxygenase family. Fe(2+) serves as cofactor.

It carries out the reaction all-trans-8'-apo-beta-carotenal + O2 = (2E,4E,6E)-2,6-dimethylocta-2,4,6-trienedial + all-trans-retinal. In terms of biological role, cleaves a number of carotenals and carotenols in the all-trans configuration at the 15-15' double bond producing retinal or retinol, respectively. Also shows activity toward lycopenals and the corresponding alcohols. Does not cleave beta-carotene or lycopene. The polypeptide is Apocarotenoid-15,15'-oxygenase (Synechocystis sp. (strain ATCC 27184 / PCC 6803 / Kazusa)).